Reading from the N-terminus, the 252-residue chain is MKKPLNKLEIKNLTFKNKNDDYIILKNLNLDINSDKVLFLLGSSGQGKSSLLKTILKQTDVIEGTILFNKQDIFQLNKKEWKSFLKEVSFLNQTTTSIPFETVFTNIVRSLQDYKNLFYNIFNLVSKSQKEEITSVLKELNILDKIYHRVDSLSGGQQQRVEIAKLMMQKPKIIIADEPTNFLDPNISKNIIELIIKMAKKFNSILIIVTHNVNLIHEFDSSILLIKNQEYHFYKSNKEINSNILDQVFKND.

One can recognise an ABC transporter domain in the interval 8–252 (LEIKNLTFKN…NILDQVFKND (245 aa)). 42–49 (GSSGQGKS) is a binding site for ATP.

The protein belongs to the ABC transporter superfamily.

Part of a high-affinity transport system. This chain is Probable ABC transporter ATP-binding protein p29, found in Mesomycoplasma hyorhinis (Mycoplasma hyorhinis).